Consider the following 299-residue polypeptide: Probable alpha-L-glutamate ligase (299 aa).

Positions 112 to 294 (LQLLTEQGIA…IALQMIVHIE (183 aa)) constitute an ATP-grasp domain. Residues Lys148, 185–186 (DF), Asp194, and 218–220 (RAN) each bind ATP. Asp255, Glu267, and Asn269 together coordinate Mg(2+). Residues Asp255, Glu267, and Asn269 each coordinate Mn(2+).

This sequence belongs to the RimK family. Mg(2+) is required as a cofactor. It depends on Mn(2+) as a cofactor.

This chain is Probable alpha-L-glutamate ligase, found in Histophilus somni (strain 129Pt) (Haemophilus somnus).